Consider the following 499-residue polypeptide: Phenylalanine--tRNA ligase alpha subunit B (499 aa).

L-phenylalanine contacts are provided by residues T330, 373 to 375 (QIE), and Y413. E415 contributes to the Mg(2+) binding site. F439 contacts L-phenylalanine.

It belongs to the class-II aminoacyl-tRNA synthetase family. Phe-tRNA synthetase alpha subunit type 2 subfamily. In terms of assembly, heterotetramer; dimer of two heterodimers formed by alpha and beta subunits. Mg(2+) serves as cofactor.

The protein resides in the cytoplasm. The catalysed reaction is tRNA(Phe) + L-phenylalanine + ATP = L-phenylalanyl-tRNA(Phe) + AMP + diphosphate + H(+). The chain is Phenylalanine--tRNA ligase alpha subunit B (farsa-b) from Xenopus laevis (African clawed frog).